The following is a 333-amino-acid chain: Acetoin:2,6-dichlorophenolindophenol oxidoreductase subunit alpha (333 aa).

In terms of assembly, tetramer of 2 alpha and 2 beta subunits. The cofactor is thiamine diphosphate.

It functions in the pathway ketone degradation; acetoin degradation. In terms of biological role, catalyzes the 2,6-dichlorophenolindophenol-dependent cleavage of acetoin into acetate and acetaldehyde, in vitro. The alpha subunit is probably the catalytic subunit of the enzyme. In Cupriavidus necator (strain ATCC 17699 / DSM 428 / KCTC 22496 / NCIMB 10442 / H16 / Stanier 337) (Ralstonia eutropha), this protein is Acetoin:2,6-dichlorophenolindophenol oxidoreductase subunit alpha (acoA).